Consider the following 779-residue polypeptide: ATP-dependent RNA helicase SUPV3L1, mitochondrial (779 aa).

Residues 1-40 (MSLPRCTLLWARLPAGRGAGPRAAPCSALRALVGSFPGAS) constitute a mitochondrion transit peptide. K99 is modified (N6-acetyllysine). The 141-residue stretch at 194–334 (EARARQRKII…AINLVSELLY (141 aa)) folds into the Helicase ATP-binding domain. 207–214 (GPTNSGKT) serves as a coordination point for ATP. A Helicase C-terminal domain is found at 353-521 (VLDHALESLD…PTAEQIEMFA (169 aa)). The segment at 650–779 (PDSSLVRSLQ…RRKKKDPDSD (130 aa)) is interaction with LAMTOR5, important for protein stability. Residues 693–703 (SGDQSRLSGAS) show a composition bias toward polar residues. Disordered regions lie at residues 693–732 (SGDQSRLSGASKSPARRTRGTKSAGNKATEPLSPSDKELP) and 754–779 (EWLTQQPEHSREKVGTRRKKKDPDSD). The residue at position 725 (S725) is a Phosphoserine. Residues 761–779 (EHSREKVGTRRKKKDPDSD) are compositionally biased toward basic and acidic residues.

Belongs to the helicase family. Homodimer; in free form. Component of the mitochondrial degradosome (mtEXO) complex which is a heteropentamer containing 2 copies of SUPV3L1 and 3 copies of PNPT1. As part of mitochondrial degradosome complex, interacts with GRSF1 in a RNA-dependent manner; the interaction enhances the activity of the complex. Interacts with LAMTOR5/HBXIP, WRN and BLM. Requires Mg(2+) as cofactor. The cofactor is Mn(2+).

It is found in the nucleus. Its subcellular location is the mitochondrion matrix. The protein localises to the mitochondrion nucleoid. It catalyses the reaction ATP + H2O = ADP + phosphate + H(+). With respect to regulation, helicase activity toward DNA substrate is inhibited by micromolar concentrations of 5,6-dichloro-1-(beta-D-ribofuranosyl)benzotriazole (DRBT) and 4,5,6,7-tetrabromobenzotriazole (TBBT). Helicase activity toward RNA substrate is inhibited by elevated concentrations of TBBT. Inhibited by some ring-expanded nucleoside analogs. Functionally, major helicase player in mitochondrial RNA metabolism. Component of the mitochondrial degradosome (mtEXO) complex, that degrades 3' overhang double-stranded RNA with a 3'-to-5' directionality in an ATP-dependent manner. Involved in the degradation of non-coding mitochondrial transcripts (MT-ncRNA) and tRNA-like molecules. ATPase and ATP-dependent multisubstrate helicase, able to unwind double-stranded (ds) DNA and RNA, and RNA/DNA heteroduplexes in the 5'-to-3' direction. Plays a role in the RNA surveillance system in mitochondria; regulates the stability of mature mRNAs, the removal of aberrantly formed mRNAs and the rapid degradation of non coding processing intermediates. Also implicated in recombination and chromatin maintenance pathways. May protect cells from apoptosis. Associates with mitochondrial DNA. The polypeptide is ATP-dependent RNA helicase SUPV3L1, mitochondrial (Supv3l1) (Mus musculus (Mouse)).